Consider the following 338-residue polypeptide: 5-dehydro-2-deoxygluconokinase (338 aa).

This sequence belongs to the carbohydrate kinase PfkB family.

It catalyses the reaction 5-dehydro-2-deoxy-D-gluconate + ATP = 6-phospho-5-dehydro-2-deoxy-D-gluconate + ADP + H(+). It functions in the pathway polyol metabolism; myo-inositol degradation into acetyl-CoA; acetyl-CoA from myo-inositol: step 5/7. Its function is as follows. Catalyzes the phosphorylation of 5-dehydro-2-deoxy-D-gluconate (2-deoxy-5-keto-D-gluconate or DKG) to 6-phospho-5-dehydro-2-deoxy-D-gluconate (DKGP). This is 5-dehydro-2-deoxygluconokinase from Mesomycoplasma hyopneumoniae (strain 232) (Mycoplasma hyopneumoniae).